Reading from the N-terminus, the 240-residue chain is tRNA (guanine-N(1)-)-methyltransferase (240 aa).

S-adenosyl-L-methionine is bound by residues G111 and 130-135 (IGDYVI).

The protein belongs to the RNA methyltransferase TrmD family. Homodimer.

Its subcellular location is the cytoplasm. It carries out the reaction guanosine(37) in tRNA + S-adenosyl-L-methionine = N(1)-methylguanosine(37) in tRNA + S-adenosyl-L-homocysteine + H(+). Its function is as follows. Specifically methylates guanosine-37 in various tRNAs. The sequence is that of tRNA (guanine-N(1)-)-methyltransferase from Mycoplasma mycoides subsp. mycoides SC (strain CCUG 32753 / NCTC 10114 / PG1).